The chain runs to 293 residues: Ribosomal protein L11 methyltransferase (293 aa).

The S-adenosyl-L-methionine site is built by threonine 145, glycine 166, aspartate 188, and asparagine 230.

The protein belongs to the methyltransferase superfamily. PrmA family.

It is found in the cytoplasm. It carries out the reaction L-lysyl-[protein] + 3 S-adenosyl-L-methionine = N(6),N(6),N(6)-trimethyl-L-lysyl-[protein] + 3 S-adenosyl-L-homocysteine + 3 H(+). Functionally, methylates ribosomal protein L11. This is Ribosomal protein L11 methyltransferase from Salmonella newport (strain SL254).